The primary structure comprises 414 residues: Cytochrome P450 GfsF (414 aa).

The tract at residues 1-32 is disordered; that stretch reads MTDTTLVEAGDPAEDAPEWPMKRDTGCPFDPP. Heme b-binding residues include H75, H107, R111, R303, H361, and C363.

It belongs to the cytochrome P450 family. Monomer. Requires heme b as cofactor.

It participates in antibiotic biosynthesis. Its function is as follows. Involved in the synthesis of the 16-membered macrolide antibiotics FD-891 and FD-892. Consecutively catalyzes epoxidation of C8-C9 and then hydroxylation at C10 to convert 25-O-methyl-FD-892 to FD-891. Consecutively catalyzes epoxidation of C8-C9 and then hydroxylation at C10 to convert 8,9-epoxy-FD-892 to 25-O-demethyl-FD-891 as well as converting 25-oxo-FD-892 to 8,9-epoxy-25-oxo-FD-892 and 8,9-epoxy-10-hydroxy-25-oxo-FD-892. In vitro is furnished with P.putida putidaredoxin and putidaredoxin reductase to provide the required two-electron reduction. This chain is Cytochrome P450 GfsF, found in Streptomyces halstedii.